A 141-amino-acid polypeptide reads, in one-letter code: ATP synthase epsilon chain (141 aa).

Belongs to the ATPase epsilon chain family. F-type ATPases have 2 components, CF(1) - the catalytic core - and CF(0) - the membrane proton channel. CF(1) has five subunits: alpha(3), beta(3), gamma(1), delta(1), epsilon(1). CF(0) has three main subunits: a, b and c.

It localises to the cell inner membrane. Functionally, produces ATP from ADP in the presence of a proton gradient across the membrane. In Burkholderia cenocepacia (strain ATCC BAA-245 / DSM 16553 / LMG 16656 / NCTC 13227 / J2315 / CF5610) (Burkholderia cepacia (strain J2315)), this protein is ATP synthase epsilon chain.